Reading from the N-terminus, the 126-residue chain is RutC family protein bbp_334 (126 aa).

This sequence belongs to the RutC family.

This chain is RutC family protein bbp_334, found in Buchnera aphidicola subsp. Baizongia pistaciae (strain Bp).